The chain runs to 534 residues: Kelch repeat and BTB domain-containing protein 4 (534 aa).

Residues 61–128 (ADVTISVEGR…IYHGTVKLRA (68 aa)) form the BTB domain. Residues 163-255 (CLQVMWLADR…SLKEIGENVH (93 aa)) form the BACK domain. Kelch repeat units follow at residues 255-301 (HIYL…KHGG), 302-344 (DLYV…SVPG), 347-394 (AIYS…NLNG), 396-446 (IYLL…VHKD), and 448-497 (VFIV…VFRD).

In terms of assembly, component of the BCR(KBTBD4) E3 ubiquitin ligase complex, at least composed of CUL3, KBTBD4 and RBX1.

Its function is as follows. Substrate-specific adapter of a BCR (BTB-CUL3-RBX1) E3 ubiquitin ligase complex which targets CoREST corepressor complex components RCOR1, KDM1A/LSD1 and HDAC2 for proteasomal degradation. RCOR1 is likely to be the primary target while degradation of KDM1A and HDAC2 is likely due to their association with RCOR1. Also targets RCOR3, MIER2 and MIER3 for proteasomal degradation as well as associated proteins ZNF217 and RREB1. Degradation is dependent on the presence of an ELM2 domain in the target proteins. In Mus musculus (Mouse), this protein is Kelch repeat and BTB domain-containing protein 4 (Kbtbd4).